A 609-amino-acid chain; its full sequence is NURS complex subunit pir2 (609 aa).

The span at 1-25 shows a compositional bias: basic and acidic residues; sequence MSEVHQESEVEYSRWKRERSPERSQ. 2 disordered regions span residues 1 to 60 and 187 to 210; these read MSEV…RASG and EKPSIPDNDTDDSILPSNDPQLSK. Residues 27-36 show a composition bias toward low complexity; sequence RSQSPPGEQS. Phosphoserine occurs at positions 28 and 30. The span at 37–57 shows a compositional bias: basic and acidic residues; the sequence is AYHRERSPLRKRGNYYDDRTR. The span at 201 to 210 shows a compositional bias: polar residues; sequence LPSNDPQLSK. The C2H2-type zinc finger occupies 474 to 499; it reads YRCHVGTCAKLFLGPEFVRKHINKKH.

Belongs to the ARS2 family. Interacts with ccr4.

It is found in the nucleus. This is NURS complex subunit pir2 from Schizosaccharomyces pombe (strain 972 / ATCC 24843) (Fission yeast).